The chain runs to 103 residues: Pyrimidine/purine nucleoside phosphorylase (103 aa).

The protein belongs to the nucleoside phosphorylase PpnP family.

The enzyme catalyses a purine D-ribonucleoside + phosphate = a purine nucleobase + alpha-D-ribose 1-phosphate. It catalyses the reaction adenosine + phosphate = alpha-D-ribose 1-phosphate + adenine. The catalysed reaction is cytidine + phosphate = cytosine + alpha-D-ribose 1-phosphate. It carries out the reaction guanosine + phosphate = alpha-D-ribose 1-phosphate + guanine. The enzyme catalyses inosine + phosphate = alpha-D-ribose 1-phosphate + hypoxanthine. It catalyses the reaction thymidine + phosphate = 2-deoxy-alpha-D-ribose 1-phosphate + thymine. The catalysed reaction is uridine + phosphate = alpha-D-ribose 1-phosphate + uracil. It carries out the reaction xanthosine + phosphate = alpha-D-ribose 1-phosphate + xanthine. Functionally, catalyzes the phosphorolysis of diverse nucleosides, yielding D-ribose 1-phosphate and the respective free bases. Can use uridine, adenosine, guanosine, cytidine, thymidine, inosine and xanthosine as substrates. Also catalyzes the reverse reactions. In Shewanella baltica (strain OS155 / ATCC BAA-1091), this protein is Pyrimidine/purine nucleoside phosphorylase.